Here is a 90-residue protein sequence, read N- to C-terminus: DNA-directed RNA polymerase subunit Rpo11 (90 aa).

This sequence belongs to the archaeal Rpo11/eukaryotic RPB11/RPC19 RNA polymerase subunit family. As to quaternary structure, part of the 13-subunit RNA polymerase complex.

The protein localises to the cytoplasm. The catalysed reaction is RNA(n) + a ribonucleoside 5'-triphosphate = RNA(n+1) + diphosphate. DNA-dependent RNA polymerase (RNAP) catalyzes the transcription of DNA into RNA using the four ribonucleoside triphosphates as substrates. The sequence is that of DNA-directed RNA polymerase subunit Rpo11 from Sulfolobus acidocaldarius (strain ATCC 33909 / DSM 639 / JCM 8929 / NBRC 15157 / NCIMB 11770).